The sequence spans 319 residues: Tryptophan--tRNA ligase (319 aa).

ATP contacts are provided by residues 8–10 (QPS) and 16–17 (GN). Residues 9–17 (PSGDLHIGN) carry the 'HIGH' region motif. Asp-131 contributes to the L-tryptophan binding site. Residues 143–145 (GKD), Val-182, and 189–193 (KMSKS) contribute to the ATP site. Positions 189–193 (KMSKS) match the 'KMSKS' region motif.

The protein belongs to the class-I aminoacyl-tRNA synthetase family. Homodimer.

It localises to the cytoplasm. The enzyme catalyses tRNA(Trp) + L-tryptophan + ATP = L-tryptophyl-tRNA(Trp) + AMP + diphosphate + H(+). Functionally, catalyzes the attachment of tryptophan to tRNA(Trp). The protein is Tryptophan--tRNA ligase of Campylobacter jejuni subsp. jejuni serotype O:2 (strain ATCC 700819 / NCTC 11168).